Here is a 949-residue protein sequence, read N- to C-terminus: ATPase 5, plasma membrane-type (949 aa).

N-acetylserine is present on S2. Residues 2 to 61 (SELDHIKNESVDLVRIPMEEVFEELKCTKQGLTANEASHRLDVFGPNKLEEKKESKLLKF) are Cytoplasmic-facing. Residues 62–81 (LGFMWNPLSWVMEVAALMAI) traverse the membrane as a helical segment. At 82 to 93 (ALANGGGRPPDW) the chain is on the extracellular side. The helical transmembrane segment at 94 to 114 (QDFVGIVCLLLINSTISFIEE) threads the bilayer. Residues 115 to 243 (NNAGNAAAAL…GHFQKVLTSI (129 aa)) are Cytoplasmic-facing. A helical transmembrane segment spans residues 244–264 (GNFCICSIALGIIVELLVMYP). Over 265 to 273 (IQRRRYRDG) the chain is Extracellular. A helical membrane pass occupies residues 274–291 (IDNLLVLLIGGIPIAMPS). At 292-643 (VLSVTMATGS…TSRAIFQRMK (352 aa)) the chain is on the cytoplasmic side. Residue D329 is the 4-aspartylphosphate intermediate of the active site. Mg(2+)-binding residues include D588 and D592. A helical membrane pass occupies residues 644–665 (NYTIYAVSITIRIVFGFMFIAL). Topologically, residues 666-670 (IWQFD) are extracellular. A helical transmembrane segment spans residues 671–693 (FSPFMVLIIAILNDGTIMTISKD). The Cytoplasmic portion of the chain corresponds to 694 to 709 (RMKPSPQPDSWKLRDI). A helical membrane pass occupies residues 710 to 730 (FSTGVVLGGYQALMTVVFFWV). Residues 731–751 (MKDSDFFSNYFGVRPLSQRPE) lie on the Extracellular side of the membrane. The helical transmembrane segment at 752-772 (QMMAALYLQVSIISQALIFVT) threads the bilayer. Topologically, residues 773–784 (RSRSWSYAECPG) are cytoplasmic. A helical membrane pass occupies residues 785–805 (LLLLGAFVIAQLVATFIAVYA). The Extracellular segment spans residues 806–813 (NWSFARIE). Residues 814–834 (GAGWGWAGVIWLYSFLTYIPL) traverse the membrane as a helical segment. Residues 835–949 (DLLKFGIRYV…IDTIQQHYTV (115 aa)) lie on the Cytoplasmic side of the membrane. T881 carries the post-translational modification Phosphothreonine. A phosphoserine mark is found at S899 and S931. The interval 947–949 (YTV) is interaction with 14-3-3 proteins. At T948 the chain carries Phosphothreonine.

Belongs to the cation transport ATPase (P-type) (TC 3.A.3) family. Type IIIA subfamily. In terms of assembly, binds to 14-3-3 proteins. The binding is induced by phosphorylation of Thr-948. Binding to 14-3-3 proteins activates the H(+)-ATPase. In terms of tissue distribution, expressed in guard cells and leaves.

The protein resides in the membrane. The catalysed reaction is ATP + H2O + H(+)(in) = ADP + phosphate + 2 H(+)(out). The plasma membrane H(+) ATPase of plants and fungi generates a proton gradient that drives the active transport of nutrients by H(+)-symport. The resulting external acidification and/or internal alkinization may mediate growth responses. The chain is ATPase 5, plasma membrane-type (AHA5) from Arabidopsis thaliana (Mouse-ear cress).